The primary structure comprises 555 residues: Cytochrome P450 monooxygenase abl2 (555 aa).

A run of 2 helical transmembrane segments spans residues 38–58 (SFDLFSKLAGLALLSFAALFI) and 141–161 (VFIGAVAKVGGAVGISMAPLA). 2 N-linked (GlcNAc...) asparagine glycosylation sites follow: Asn-325 and Asn-360. Residue Cys-489 coordinates heme.

Belongs to the cytochrome P450 family. The cofactor is heme.

The protein resides in the membrane. The protein operates within hormone biosynthesis. In terms of biological role, cytochrome P450 monooxygenase; part of the gene cluster that mediates the biosynthesis of abscisic acid (ABA), a phytohormone that acts antagonistically toward salicylic acid (SA), jasmonic acid (JA) and ethylene (ETH) signaling, to impede plant defense responses. The first step of the pathway catalyzes the reaction from farnesyl diphosphate to alpha-ionylideneethane performed by the alpha-ionylideneethane synthase abl3 via a three-step reaction mechanism involving 2 neutral intermediates, beta-farnesene and allofarnesene. The cytochrome P450 monooxygenase abl1 might then be involved in the conversion of alpha-ionylideneethane to alpha-ionylideneacetic acid. Alpha-ionylideneacetic acid is further converted to abscisic acid in 2 steps involving the cytochrome P450 monooxygenase abl2 and the short-chain dehydrogenase/reductase abl4, via the intermediates 1'-deoxy-ABA or 1',4'-trans-diol-ABA, depending on the order of action of these 2 enzymes. Abl2 is responsible for the hydroxylation of carbon atom C-1' and abl4 might be involved in the oxidation of the C-4' carbon atom. The chain is Cytochrome P450 monooxygenase abl2 from Leptosphaeria maculans (strain JN3 / isolate v23.1.3 / race Av1-4-5-6-7-8) (Blackleg fungus).